The following is a 286-amino-acid chain: Pantothenate synthetase (286 aa).

M31–H38 contacts ATP. The active-site Proton donor is H38. A (R)-pantoate-binding site is contributed by Q65. Position 65 (Q65) interacts with beta-alanine. G153 to D156 provides a ligand contact to ATP. Position 159 (Q159) interacts with (R)-pantoate. ATP is bound at residue L190 to R193.

This sequence belongs to the pantothenate synthetase family. As to quaternary structure, homodimer.

The protein localises to the cytoplasm. The catalysed reaction is (R)-pantoate + beta-alanine + ATP = (R)-pantothenate + AMP + diphosphate + H(+). It participates in cofactor biosynthesis; (R)-pantothenate biosynthesis; (R)-pantothenate from (R)-pantoate and beta-alanine: step 1/1. Its function is as follows. Catalyzes the condensation of pantoate with beta-alanine in an ATP-dependent reaction via a pantoyl-adenylate intermediate. This is Pantothenate synthetase from Corynebacterium diphtheriae (strain ATCC 700971 / NCTC 13129 / Biotype gravis).